The sequence spans 116 residues: Iron-sulfur cluster insertion protein ErpA (116 aa).

The iron-sulfur cluster site is built by Cys44, Cys108, and Cys110.

Belongs to the HesB/IscA family. Homodimer. It depends on iron-sulfur cluster as a cofactor.

Functionally, required for insertion of 4Fe-4S clusters for at least IspG. This chain is Iron-sulfur cluster insertion protein ErpA, found in Ectopseudomonas mendocina (strain ymp) (Pseudomonas mendocina).